The primary structure comprises 477 residues: Alkaline phosphatase (477 aa).

Asp-44 contacts Mg(2+). A Zn(2+)-binding site is contributed by Asp-44. The active-site Phosphoserine intermediate is Ser-94. N-linked (GlcNAc...) asparagine glycosylation occurs at Asn-124. Mg(2+) contacts are provided by His-155 and Thr-157. Cys-165 and Cys-185 are disulfide-bonded. Asn-214 carries an N-linked (GlcNAc...) asparagine glycan. Glu-315 is a Mg(2+) binding site. Asp-320, His-324, Asp-361, and His-362 together coordinate Zn(2+). Asn-413 carries an N-linked (GlcNAc...) asparagine glycan. Zn(2+) is bound at residue His-437.

In terms of assembly, homodimer. Mg(2+) serves as cofactor. Requires Zn(2+) as cofactor.

It localises to the cell membrane. It carries out the reaction a phosphate monoester + H2O = an alcohol + phosphate. This Gadus morhua (Atlantic cod) protein is Alkaline phosphatase.